The following is a 314-amino-acid chain: Cyclin-dependent kinase 2 (314 aa).

Residues 8–287 form the Protein kinase domain; sequence FQRAEKIGEG…AKDALQHAYF (280 aa). Residues 14 to 22 and Lys37 each bind ATP; that span reads IGEGTYGIV. Thr18 bears the Phosphothreonine mark. The residue at position 19 (Tyr19) is a Phosphotyrosine. Asp130 functions as the Proton acceptor in the catalytic mechanism. The residue at position 162 (Tyr162) is a Phosphotyrosine. Position 163 is a phosphothreonine (Thr163).

Belongs to the protein kinase superfamily. CMGC Ser/Thr protein kinase family. CDC2/CDKX subfamily. In terms of assembly, interacts with cyclin CycG.

It catalyses the reaction L-seryl-[protein] + ATP = O-phospho-L-seryl-[protein] + ADP + H(+). The enzyme catalyses L-threonyl-[protein] + ATP = O-phospho-L-threonyl-[protein] + ADP + H(+). It carries out the reaction [DNA-directed RNA polymerase] + ATP = phospho-[DNA-directed RNA polymerase] + ADP + H(+). Functionally, like Cdk1, could play a key role in the control of the eukaryotic cell cycle. The sequence is that of Cyclin-dependent kinase 2 from Drosophila melanogaster (Fruit fly).